A 404-amino-acid chain; its full sequence is MTVKTPVYLDYAATTTVDKRVAEKMIPYLTETFGNPASNSHAFGWEAEEAVEKARADIAALINADPKEIVFTSGATESDNLAIKGAANFYKTKGKHLITVKTEHKAVLDTMRELERQGFEVTYLGVQENGLIDLEELKAAIRDDTILVSVMWANNEIGVVQDIPAIGEICRERKIVFHVDAAQACGKVPVDVEAAKIDLLSMSAHKVYGPKGIGALYVRRKPRVRLEAQMHGGGHERGFRSGTLPTHQIVGMGEAFRIAKEELEQDMAHYRKLRDIFLKGIEGIEEVYINGDLEHRVPNNLNVSFNFVEGESLIMAVKELAVSSGSACTSASLEPSYVLRALGRNDELAHSSLRITFGRMTTEEEVQFAAELIKSKIGKLRELSPLWEMFKDGIDLNSIEWAAH.

Pyridoxal 5'-phosphate contacts are provided by residues 75-76, asparagine 155, glutamine 183, and 203-205; these read AT and SAH. Lysine 206 is modified (N6-(pyridoxal phosphate)lysine). Threonine 243 is a pyridoxal 5'-phosphate binding site. Cysteine 328 (cysteine persulfide intermediate) is an active-site residue. Cysteine 328 provides a ligand contact to [2Fe-2S] cluster.

Belongs to the class-V pyridoxal-phosphate-dependent aminotransferase family. NifS/IscS subfamily. As to quaternary structure, homodimer. Forms a heterotetramer with IscU, interacts with other sulfur acceptors. The cofactor is pyridoxal 5'-phosphate.

The protein localises to the cytoplasm. The catalysed reaction is (sulfur carrier)-H + L-cysteine = (sulfur carrier)-SH + L-alanine. The protein operates within cofactor biosynthesis; iron-sulfur cluster biosynthesis. Its function is as follows. Master enzyme that delivers sulfur to a number of partners involved in Fe-S cluster assembly, tRNA modification or cofactor biosynthesis. Catalyzes the removal of elemental sulfur atoms from cysteine to produce alanine. Functions as a sulfur delivery protein for Fe-S cluster synthesis onto IscU, an Fe-S scaffold assembly protein, as well as other S acceptor proteins. This is Cysteine desulfurase IscS from Neisseria meningitidis serogroup A / serotype 4A (strain DSM 15465 / Z2491).